We begin with the raw amino-acid sequence, 107 residues long: Basic phospholipase A2 sphenotoxin subunit B (107 aa).

Ca(2+)-binding residues include Tyr27, Gly29, and Gly31. 5 cysteine pairs are disulfide-bonded: Cys28/Cys44, Cys43/Cys91, Cys50/Cys88, Cys57/Cys81, and Cys75/Cys86. Residue His47 is part of the active site. Asp48 lines the Ca(2+) pocket. Asp89 is a catalytic residue.

The protein belongs to the phospholipase A2 family. Group II subfamily. D49 sub-subfamily. Heterodimer of A and B chains; non-covalently linked. The acidic protein (B chain) has phospholipase A2 activity and the A chain weakly inhibits the B chain enzymatic activity but potentiates its lethal potency. In terms of tissue distribution, expressed by the venom gland.

It is found in the secreted. It carries out the reaction a 1,2-diacyl-sn-glycero-3-phosphocholine + H2O = a 1-acyl-sn-glycero-3-phosphocholine + a fatty acid + H(+). Its function is as follows. Heterodimer A-B: Sphenotoxin is a potent neurotoxin that possesses phospholipase A2 (PLA2) activity. It consists of a non-covalent association of a basic PLA2 subunit B with a non-enzymatic subunit A. In terms of biological role, monomer B: Not found in vivo. In vitro, potent neurotoxin that possesses phospholipase A2 (PLA2) activity and exerts a lethal action by blocking neuromuscular transmission. Induces paralysis of the hind legs and neuromuscular blockade in mouse phrenic nerve-diaphragm preparations. PLA2 catalyzes the calcium-dependent hydrolysis of the 2-acyl groups in 3-sn-phosphoglycerides. This chain is Basic phospholipase A2 sphenotoxin subunit B, found in Ophryacus sphenophrys (Broad-horned pitviper).